The chain runs to 452 residues: Chaperone SurA (452 aa).

Residues 1–28 (MKKTLRFAAVVSSLAASAALLVAAPAAA) form the signal peptide. PpiC domains are found at residues 186 to 288 (QQDL…RLVD) and 302 to 400 (IVQT…QVLN).

Its subcellular location is the periplasm. It catalyses the reaction [protein]-peptidylproline (omega=180) = [protein]-peptidylproline (omega=0). Chaperone involved in the correct folding and assembly of outer membrane proteins. Recognizes specific patterns of aromatic residues and the orientation of their side chains, which are found more frequently in integral outer membrane proteins. May act in both early periplasmic and late outer membrane-associated steps of protein maturation. The chain is Chaperone SurA from Burkholderia orbicola (strain AU 1054).